The sequence spans 134 residues: Large ribosomal subunit protein eL14z (134 aa).

It belongs to the eukaryotic ribosomal protein eL14 family.

The chain is Large ribosomal subunit protein eL14z (RPL14A) from Arabidopsis thaliana (Mouse-ear cress).